A 200-amino-acid polypeptide reads, in one-letter code: Glutathione S-transferase 1-1 (200 aa).

The 73-residue stretch at 1–73 folds into the GST N-terminal domain; that stretch reads GSSPCRSVIM…YLVEKYGKTD (73 aa). Residues S2, 43 to 45, and 57 to 59 each bind glutathione; these read HTI and ESR. The 122-residue stretch at 79-200 folds into the GST C-terminal domain; it reads CPKKRAVINQ…AGCLEFKKFF (122 aa).

The protein belongs to the GST superfamily. Theta family. Homodimer.

The catalysed reaction is RX + glutathione = an S-substituted glutathione + a halide anion + H(+). It catalyses the reaction 1,1,1-trichloro-2,2-bis(4-chlorophenyl)ethane = 1,1-dichloro-2,2-bis(4-chlorophenyl)ethylene + chloride + H(+). Conjugation of reduced glutathione to a wide number of exogenous and endogenous hydrophobic electrophiles. Has DDT dehydrochlorinase activity. This chain is Glutathione S-transferase 1-1 (GstD1), found in Drosophila mauritiana (Fruit fly).